We begin with the raw amino-acid sequence, 899 residues long: MFGSIIKKIVGSKNERELKRLWPIVEKINGLEPQMAALTDDQLRNKTSEFKERCAKGESLDSLLPEAFAVCREAGKRVHNMRHFDVQLIGGMVLHSGKIAEMKTGEGKTLVATLPAYLNALTGKGVHVVTVNDYLAKRDSDWMGRIYNFLGLSVGVIVHGLDDEERREAYAADITYGTNNEFGFDYLRDNMKFSLDDYVQRPFYFSIVDEVDSILIDEARTPLIISGPTEDSTDKYYIIDRVIPHLKKGEMKEVEANTLSGKKKEYTGDFTVDEKARSATLTEEGVLKVEKLLKIDNLYDPRHMEFLHHVNQALRAHALFRRDVDYVVKEGEVIIVDEFTGRLMPGRRWSDGLHQAIEAKEGVEIENENQTLATITFQNYFRMYEKLSGMTGTADTEAEEFHKIYKLDVTVIPTNRPLLRPDFPDVIYKTEREKFAAVIEEIKDCHQKGQPVLVGTISIEKSEILSELLKKQGIPHNVLNAKQHEREAEIVAQAGRKGMLTIATNMAGRGTDIVLGGNPDSLAKQWRRENPDAADEEYAAILAKYKAECAAEHDEVVKLGGLHILGTERHESRRIDNQLRGRSGRQGDPGSSRFYLSLEDDLLRIFGSERVSKIMDFLKIEEGEAITHGMITKAIENAQKKVEAHNFEIRKHLIEYDDVMNKQREVIYTQRREILAGEDIRGNFTQMLDDTIEDIAAAFAIDKVHASEWDWQAIVEAVYKTFGFQIDIPAETMDRLAPESFRKLLKESVHEAYEGKLASFGDELMDHLIKVIMLQAIDSQWKDHLLSIDHLKEGIGLRGYGQKDPKQEYKKEAYRLFMDMMARIAEETVEKIFWVQIAREEDVERMEEEQQQQAQKKIVFNLGEEPATAPQPARSKKSASRNDPCPCGSGKKYKKCCGK.

Residues glutamine 87, 105–109 (GEGKT), and aspartate 512 each bind ATP. The tract at residues 846 to 899 (MEEEQQQQAQKKIVFNLGEEPATAPQPARSKKSASRNDPCPCGSGKKYKKCCGK) is disordered. Cysteine 885, cysteine 887, cysteine 896, and cysteine 897 together coordinate Zn(2+).

Belongs to the SecA family. Monomer and homodimer. Part of the essential Sec protein translocation apparatus which comprises SecA, SecYEG and auxiliary proteins SecDF-YajC and YidC. It depends on Zn(2+) as a cofactor.

Its subcellular location is the cell inner membrane. The protein localises to the cytoplasm. It catalyses the reaction ATP + H2O + cellular proteinSide 1 = ADP + phosphate + cellular proteinSide 2.. Part of the Sec protein translocase complex. Interacts with the SecYEG preprotein conducting channel. Has a central role in coupling the hydrolysis of ATP to the transfer of proteins into and across the cell membrane, serving as an ATP-driven molecular motor driving the stepwise translocation of polypeptide chains across the membrane. This chain is Protein translocase subunit SecA, found in Geobacter metallireducens (strain ATCC 53774 / DSM 7210 / GS-15).